The following is a 282-amino-acid chain: MATYLIGDVHGCYDELIALLHKVEFTPGKDTLWLTGDLVARGPGSLDVLRYVKSLGDSVRLVLGNHDLHLLAVFTGISRNKPKDRLTPLLEAPDADELLNWLRRQPLLQIDEEKKLVMAHAGITPQWDLPTAKDCARDVEAVLSSDSYPFFLDAMYGDMPNNWSPELRGLGRLRFITNAFTRMRFCFPNGQLDMYSKESPEEAPAPLKPWFAIPGPVAEEYSIAFGHWASLEGKGTPEGIYALDTGCCWGGSLTCLRWEDKQYFVQPSNRHKDMGEGEAVAS.

The protein belongs to the Ap4A hydrolase family.

It carries out the reaction P(1),P(4)-bis(5'-adenosyl) tetraphosphate + H2O = 2 ADP + 2 H(+). Functionally, hydrolyzes diadenosine 5',5'''-P1,P4-tetraphosphate to yield ADP. This is Bis(5'-nucleosyl)-tetraphosphatase, symmetrical from Shigella dysenteriae serotype 1 (strain Sd197).